The chain runs to 633 residues: Keratin, type II cytoskeletal 2 epidermal (633 aa).

The segment at 1–189 (MSCQISCKSR…DPEIQNVKSQ (189 aa)) is head. Arg-18 carries the asymmetric dimethylarginine modification. A phosphoserine mark is found at Ser-21, Ser-24, and Ser-60. The segment at 190–225 (EREQIKTLNNKFASFIDKVRFLEQQNQVLQTKWELL) is coil 1A. In terms of domain architecture, IF rod spans 190–503 (EREQIKTLNN…KLLEGEECRM (314 aa)). A linker 1 region spans residues 226–244 (QQLDVSTRTTNLEPIFQAY). The tract at residues 245-336 (IAKLKKYVDT…FLFDXELSQM (92 aa)) is coil 1B. Residues 337–360 (QTQISETNVTLSMDNNRSLDLDSI) are linker 12. The tract at residues 361-499 (ISEVKAQYEE…ATYRKLLEGE (139 aa)) is coil 2. Residues 500-633 (ECRMSGDLSS…SGSSVTFSFR (134 aa)) form a tail region. Over residues 518-527 (SSMSSSMTSR) the composition is skewed to low complexity. Residues 518-633 (SSMSSSMTSR…SGSSVTFSFR (116 aa)) are disordered. Positions 528–613 (GGFGGYGSGG…GYGSGGGSRG (86 aa)) are enriched in gly residues. An omega-N-methylarginine mark is found at Arg-588 and Arg-612.

Belongs to the intermediate filament family. In terms of assembly, heterotetramer of two type I and two type II keratins. Associates with KRT10.

The protein localises to the cytoplasm. Probably contributes to terminal cornification. Associated with keratinocyte activation, proliferation and keratinization. Required for maintenance of corneocytes and keratin filaments in suprabasal keratinocytes in the epidermis of the ear, potentially via moderation of expression and localization of keratins and their partner proteins. Plays a role in the establishment of the epidermal barrier on plantar skin. The sequence is that of Keratin, type II cytoskeletal 2 epidermal (KRT2) from Canis lupus familiaris (Dog).